The sequence spans 262 residues: Acyl-[acyl-carrier-protein]--UDP-N-acetylglucosamine O-acyltransferase (262 aa).

The protein belongs to the transferase hexapeptide repeat family. LpxA subfamily. In terms of assembly, homotrimer.

Its subcellular location is the cytoplasm. It catalyses the reaction a (3R)-hydroxyacyl-[ACP] + UDP-N-acetyl-alpha-D-glucosamine = a UDP-3-O-[(3R)-3-hydroxyacyl]-N-acetyl-alpha-D-glucosamine + holo-[ACP]. The protein operates within glycolipid biosynthesis; lipid IV(A) biosynthesis; lipid IV(A) from (3R)-3-hydroxytetradecanoyl-[acyl-carrier-protein] and UDP-N-acetyl-alpha-D-glucosamine: step 1/6. Involved in the biosynthesis of lipid A, a phosphorylated glycolipid that anchors the lipopolysaccharide to the outer membrane of the cell. The chain is Acyl-[acyl-carrier-protein]--UDP-N-acetylglucosamine O-acyltransferase from Janthinobacterium sp. (strain Marseille) (Minibacterium massiliensis).